We begin with the raw amino-acid sequence, 757 residues long: Protein ALTERED SEED GERMINATION 2 (757 aa).

WD repeat units follow at residues 6–43 (FHDG…LSQE), 48–87 (GHQG…LLHS), 91–132 (GHTA…GRAE), 145–185 (CHTR…SCPP), 213–253 (KQTL…PLAS), and 277–316 (RTNL…CSTG). The Nuclear localization signal signature appears at 245-257 (RRMLPPLASSRKR). The stretch at 442-475 (FKAHYYMSEALQQLGKCKEALDFATAAQHMNPSD) is one TPR repeat. The disordered stretch occupies residues 519–601 (ANSDSSHDMS…SSSQNDRTSY (83 aa)). The span at 523–532 (SSHDMSRSER) shows a compositional bias: basic and acidic residues. The span at 533 to 543 (EDSDYDEELEL) shows a compositional bias: acidic residues. Polar residues predominate over residues 582–601 (TVDNASSGTASSSQNDRTSY). 2 WD repeats span residues 618-658 (NVGT…LMKV) and 661-700 (GDES…PSIV). Cysteine 754 carries S-12-hydroxyfarnesyl cysteine; by FTB/ERA1 lipidation.

As to quaternary structure, interacts with DDB1; the subcellular localization of this complex depends on farnesylation status. Binds to HDA9 in the cytosol when farnesylated. Farnesylated at Cys-754 by FTB/ERA1; this modification triggers an exclusion from the nucleus.

The protein resides in the nucleus. Its subcellular location is the cytoplasm. It is found in the cytosol. It participates in protein modification; protein ubiquitination. May function as a substrate adapter for CUL4-DDB1 E3 ubiquitin-protein ligase complex. Negative regulator of fatty acid biosynthetic process and accumulation. Acts as an abscisic acid (ABA) negative regulator. Involved in responses to salt (NaCl) and osmotic (e.g. in response to mannitol and PEG) stresses. The polypeptide is Protein ALTERED SEED GERMINATION 2 (Arabidopsis thaliana (Mouse-ear cress)).